A 293-amino-acid polypeptide reads, in one-letter code: Diaminopimelate epimerase (293 aa).

Substrate-binding residues include Asn-11 and Asn-78. Cys-87 functions as the Proton donor in the catalytic mechanism. Substrate is bound by residues 88-89 (GN), Asn-166, Asn-202, and 220-221 (ER). Cys-229 acts as the Proton acceptor in catalysis. Position 230–231 (230–231 (GT)) interacts with substrate.

This sequence belongs to the diaminopimelate epimerase family. As to quaternary structure, homodimer.

It localises to the cytoplasm. It carries out the reaction (2S,6S)-2,6-diaminopimelate = meso-2,6-diaminopimelate. It functions in the pathway amino-acid biosynthesis; L-lysine biosynthesis via DAP pathway; DL-2,6-diaminopimelate from LL-2,6-diaminopimelate: step 1/1. Functionally, catalyzes the stereoinversion of LL-2,6-diaminopimelate (L,L-DAP) to meso-diaminopimelate (meso-DAP), a precursor of L-lysine and an essential component of the bacterial peptidoglycan. The protein is Diaminopimelate epimerase of Mycobacterium sp. (strain JLS).